The following is a 286-amino-acid chain: Glycine--tRNA ligase alpha subunit (286 aa).

This sequence belongs to the class-II aminoacyl-tRNA synthetase family. Tetramer of two alpha and two beta subunits.

It localises to the cytoplasm. The catalysed reaction is tRNA(Gly) + glycine + ATP = glycyl-tRNA(Gly) + AMP + diphosphate. In Thermotoga maritima (strain ATCC 43589 / DSM 3109 / JCM 10099 / NBRC 100826 / MSB8), this protein is Glycine--tRNA ligase alpha subunit (glyQ).